A 352-amino-acid chain; its full sequence is Protein RecA (352 aa).

66–73 is a binding site for ATP; the sequence is GPESSGKT. The disordered stretch occupies residues 330 to 352; the sequence is TKDDSKVATVDKANEEQAAEPVQ.

This sequence belongs to the RecA family.

It localises to the cytoplasm. Functionally, can catalyze the hydrolysis of ATP in the presence of single-stranded DNA, the ATP-dependent uptake of single-stranded DNA by duplex DNA, and the ATP-dependent hybridization of homologous single-stranded DNAs. It interacts with LexA causing its activation and leading to its autocatalytic cleavage. The polypeptide is Protein RecA (Psychrobacter cryohalolentis (strain ATCC BAA-1226 / DSM 17306 / VKM B-2378 / K5)).